The primary structure comprises 103 residues: uncharacterized protein (103 aa).

The CHCH domain occupies 10–63; the sequence is FPECDHLKQIYDKCFTEFFQKFITPNYRHQYAVNPCERLHDVYKRCVEERLATQ. 2 consecutive short sequence motifs (cx9C motif) follow at residues 13 to 23 and 45 to 55; these read CDHLKQIYDKC and CERLHDVYKRC. 2 disulfide bridges follow: cysteine 13-cysteine 55 and cysteine 23-cysteine 45. Over residues 80 to 90 the composition is skewed to basic and acidic residues; that stretch reads TDDDKLKDRQN. A disordered region spans residues 80-103; it reads TDDDKLKDRQNNQKTNSENKCSSS. Residues 91–103 show a composition bias toward polar residues; the sequence is NQKTNSENKCSSS.

It belongs to the TRIAP1/MDM35 family.

This is an uncharacterized protein from Caenorhabditis elegans.